The following is a 343-amino-acid chain: Phosphoribosylformylglycinamidine cyclo-ligase (343 aa).

It belongs to the AIR synthase family.

It is found in the cytoplasm. The catalysed reaction is 2-formamido-N(1)-(5-O-phospho-beta-D-ribosyl)acetamidine + ATP = 5-amino-1-(5-phospho-beta-D-ribosyl)imidazole + ADP + phosphate + H(+). The protein operates within purine metabolism; IMP biosynthesis via de novo pathway; 5-amino-1-(5-phospho-D-ribosyl)imidazole from N(2)-formyl-N(1)-(5-phospho-D-ribosyl)glycinamide: step 2/2. The sequence is that of Phosphoribosylformylglycinamidine cyclo-ligase from Rippkaea orientalis (strain PCC 8801 / RF-1) (Cyanothece sp. (strain PCC 8801)).